The primary structure comprises 396 residues: Bone morphogenetic protein 2 (396 aa).

A signal peptide spans 1-23 (MVAGTRCLLALLLPQVLLGGAAG). The propeptide at 24 to 282 (LIPELGRRKF…GHPLHRREKR (259 aa)) is cleaved by PCSK5. At Ser87 the chain carries Phosphoserine. 4 N-linked (GlcNAc...) asparagine glycosylation sites follow: Asn135, Asn163, Asn164, and Asn200. A disordered region spans residues 272 to 293 (KGHPLHRREKRQAKHKQRKRLK). Positions 274–293 (HPLHRREKRQAKHKQRKRLK) are enriched in basic residues. Cystine bridges form between Cys296–Cys361, Cys325–Cys393, and Cys329–Cys395. Asn338 is a glycosylation site (N-linked (GlcNAc...) asparagine).

Belongs to the TGF-beta family. In terms of assembly, homodimer; disulfide-linked. Interacts with SOSTDC1. Interacts with GREM2, RGMA, RGMB and RGMC. Interacts with ASPN. Interacts with MAFP5. Interacts with FBN1 (via N-terminal domain) and FBN2. Interacts with type I receptor BMPR1A. Interacts with type II receptor BMPR2. Interacts with ERFE. Interacts with BMPR1A/ALK3; the interaction may induce HAMP expression. Interacts with TGFBR3.

The protein resides in the secreted. Functionally, growth factor of the TGF-beta superfamily that plays essential roles in many developmental processes, including cardiogenesis, neurogenesis, and osteogenesis. Induces cartilage and bone formation. Initiates the canonical BMP signaling cascade by associating with type I receptor BMPR1A and type II receptor BMPR2. Once all three components are bound together in a complex at the cell surface, BMPR2 phosphorylates and activates BMPR1A. In turn, BMPR1A propagates signal by phosphorylating SMAD1/5/8 that travel to the nucleus and act as activators and repressors of transcription of target genes. Also acts to promote expression of HAMP, via the interaction with its receptor BMPR1A/ALK3. Can also signal through non-canonical pathways such as ERK/MAP kinase signaling cascade that regulates osteoblast differentiation. Also stimulates the differentiation of myoblasts into osteoblasts via the EIF2AK3-EIF2A-ATF4 pathway by stimulating EIF2A phosphorylation which leads to increased expression of ATF4 which plays a central role in osteoblast differentiation. Acts as a positive regulator of odontoblast differentiation during mesenchymal tooth germ formation, expression is repressed during the bell stage by MSX1-mediated inhibition of CTNNB1 signaling. The sequence is that of Bone morphogenetic protein 2 (BMP2) from Dama dama (Fallow deer).